The following is a 142-amino-acid chain: 3-hydroxyacyl-[acyl-carrier-protein] dehydratase FabZ (142 aa).

His48 is an active-site residue.

Belongs to the thioester dehydratase family. FabZ subfamily.

The protein resides in the cytoplasm. The enzyme catalyses a (3R)-hydroxyacyl-[ACP] = a (2E)-enoyl-[ACP] + H2O. In terms of biological role, involved in unsaturated fatty acids biosynthesis. Catalyzes the dehydration of short chain beta-hydroxyacyl-ACPs and long chain saturated and unsaturated beta-hydroxyacyl-ACPs. The sequence is that of 3-hydroxyacyl-[acyl-carrier-protein] dehydratase FabZ from Desulforamulus reducens (strain ATCC BAA-1160 / DSM 100696 / MI-1) (Desulfotomaculum reducens).